A 548-amino-acid polypeptide reads, in one-letter code: T-complex protein 1 subunit theta (548 aa).

Positions 528 to 548 (ATGGPKPRGPKQQDEDDDGMA) are disordered.

It belongs to the TCP-1 chaperonin family. In terms of assembly, heterooligomeric complex.

Its subcellular location is the cytoplasm. In terms of biological role, molecular chaperone; assists the folding of proteins upon ATP hydrolysis. Known to play a role, in vitro, in the folding of actin and tubulin. Required for correct subcellular localization of pgl-1. The sequence is that of T-complex protein 1 subunit theta from Caenorhabditis briggsae.